Here is a 1872-residue protein sequence, read N- to C-terminus: Histone acetyltransferase KAT6B (1872 aa).

Residues 1–77 (MVKLANPLYT…LASYKDPDNP (77 aa)) enclose the SAMD1-like winged helix (WH) domain. Disordered regions lie at residues 70–103 (SYKD…CNDL) and 168–207 (KEGP…HEKD). Residues 104 to 177 (RNVDWNKLLK…KEGPQYRVNS (74 aa)) enclose the H15 domain. Residues 189–202 (PSAFPSSLPPVSLL) show a composition bias toward low complexity. 2 consecutive PHD-type zinc fingers follow at residues 214–273 (IPIC…CKTC) and 270–321 (CKTC…CRPK). A Phosphoserine modification is found at serine 356. The tract at residues 361–417 (EGSMSAFTGRGSPGRGQKTKVSTTPSSGHAASGKHSSSRLAVTDPTRPGATTKTTTS) is disordered. The tract at residues 362-535 (GSMSAFTGRG…ECESGVEDCG (174 aa)) is negatively regulates HAT activity. The span at 386–395 (SSGHAASGKH) shows a compositional bias: low complexity. Lysine 491 is covalently cross-linked (Glycyl lysine isopeptide (Lys-Gly) (interchain with G-Cter in SUMO2)). Positions 533-807 (DCGRYPSVIE…LDPESLRWTP (275 aa)) constitute an MYST-type HAT domain. Residues 536-826 (RYPSVIEFGK…EEEREAEKEA (291 aa)) are catalytic. The C2HC MYST-type zinc finger occupies 566-591 (LYLCEFCLKYMKSKNILLRHSKKCGW). The interval 570–826 (EFCLKYMKSK…EEEREAEKEA (257 aa)) is interaction with BRPF1. At lysine 633 the chain carries N6-acetyllysine; by autocatalysis. Acetyl-CoA is bound by residues 674–678 (SCIMI) and 683–689 (QRQGFGR). Glutamate 709 acts as the Proton donor/acceptor in catalysis. An acetyl-CoA-binding site is contributed by serine 713. The span at 846 to 860 (SRVSSRQSSAKVQSK) shows a compositional bias: low complexity. Disordered regions lie at residues 846–1018 (SRVS…NHFF), 1031–1252 (DAEH…FKDA), 1283–1358 (MSCN…DDTF), and 1388–1418 (DECQ…SPSV). Lysine 856, lysine 860, and lysine 862 each carry N6-acetyllysine. A Phosphoserine modification is found at serine 866. Residues 887-909 (SEEEEEEEEEDDEEEEEEEEEES) are compositionally biased toward acidic residues. A compositionally biased stretch (polar residues) spans 910 to 924 (IQTSPPRLTKPQSVS). Residues 925–944 (IKRKRPFVVKKKRGRKRRRI) are compositionally biased toward basic residues. Low complexity predominate over residues 946–959 (SSVTTETISETTEV). Residues 991 to 1004 (PVLRKAFPHQPGKK) show a composition bias toward basic residues. Composition is skewed to basic and acidic residues over residues 1031–1047 (DAEH…EPLK) and 1094–1114 (EEQK…REVT). The span at 1155–1176 (EEGEEEGEEEGEREEQEEEEEV) shows a compositional bias: acidic residues. The segment covering 1177-1207 (TTEKDLDGAKSKENPEPEISMEKEDPVHLGD) has biased composition (basic and acidic residues). A compositionally biased stretch (acidic residues) spans 1208–1217 (HEEDEDEEEE). 2 stretches are compositionally biased toward basic and acidic residues: residues 1238–1252 (NMER…FKDA) and 1310–1320 (QTQKQDQKNSD). A compositionally biased stretch (polar residues) spans 1339–1349 (ETAQAVQSLTQ). The tract at residues 1359–1872 (PDCAETQEAC…QSLNGSYMRR (514 aa)) is interaction with RUNX1 and RUNX2. Over residues 1393-1410 (SDHSSPVSSVHSHPGQSV) the composition is skewed to low complexity.

Belongs to the MYST (SAS/MOZ) family. As to quaternary structure, component of the MOZ/MORF complex composed at least of ING5, KAT6A, KAT6B, MEAF6 and one of BRPF1, BRD1/BRPF2 and BRPF3. Interacts with RUNX1 and RUNX2. Post-translationally, autoacetylation at Lys-633 is required for proper function. Ubiquitously expressed.

The protein resides in the nucleus. The enzyme catalyses L-lysyl-[protein] + acetyl-CoA = N(6)-acetyl-L-lysyl-[protein] + CoA + H(+). Its function is as follows. Histone acetyltransferase which may be involved in both positive and negative regulation of transcription. Required for RUNX2-dependent transcriptional activation. Component of the MOZ/MORF complex which has a histone H3 acetyltransferase activity. Involved in cerebral cortex development. This Mus musculus (Mouse) protein is Histone acetyltransferase KAT6B (Kat6b).